Reading from the N-terminus, the 630-residue chain is Probable potassium transport system protein Kup 1 (630 aa).

Helical transmembrane passes span 15–35 (FAALALAALGVVYGDIGTSPL), 59–79 (LSLIFWALVIVVSVKYVTFIM), 109–129 (WIMIVGVLGAAMFYGDGMVTP), 145–165 (PALKPFVIPLTMVVLFILFFV), 173–193 (VGAFFGPVMLVWFSALALLGV), 223–243 (LVAMGNVVLAVTGAEALYADM), 255–275 (WFAFVLPALVLNYFGQGALIL), 297–317 (LVGLATLATVIASQAVISGAF), 345–365 (IYLPAVNWGLMVAVMILVLGF), 374–394 (AYGIAVTGDMVITSILATVVV), 405–425 (AGLLFACFLSVELVFLAANIL), and 427–447 (IPDGGWFPLVAGMGVFVLMTT).

Belongs to the HAK/KUP transporter (TC 2.A.72) family.

Its subcellular location is the cell inner membrane. The catalysed reaction is K(+)(in) + H(+)(in) = K(+)(out) + H(+)(out). Functionally, transport of potassium into the cell. Likely operates as a K(+):H(+) symporter. This chain is Probable potassium transport system protein Kup 1, found in Dechloromonas aromatica (strain RCB).